A 119-amino-acid chain; its full sequence is MPRVKGGTVSRQRRKKVLKLAKGYFGSKHRLYKVANQQVMKSGNYAFRDRRQKKRDFRKLWITRINAAARMNGLSYSRLMHGLKLSGIEVNRKMLADLAVNDLTAFNQLADAAKAQLDK.

Belongs to the bacterial ribosomal protein bL20 family.

In terms of biological role, binds directly to 23S ribosomal RNA and is necessary for the in vitro assembly process of the 50S ribosomal subunit. It is not involved in the protein synthesizing functions of that subunit. This is Large ribosomal subunit protein bL20 from Bacillus velezensis (strain DSM 23117 / BGSC 10A6 / LMG 26770 / FZB42) (Bacillus amyloliquefaciens subsp. plantarum).